Consider the following 304-residue polypeptide: MNEQHAQSDRPPTVRPMDFLLVTGLSGAGLQTAAKVLEDLGWYVADNLPPELISRMVDLSLESDSRLERLAVVIDVRSRLFTGDLGWVLTELESKPVHTRVLYLDASDEVLVRRFEQVRRSHPLSGGGAEGTLSEGIAAERDQLAKVKAAADLVIDTSSLAAHQLRQKIEDAFGDAENRTMQVTVQSFGFKYGLPMDADLVCDVRFLPNPHWIPELRPHTGQSEDVRDYVLSQDGAEDYLATYHHLLDLTIAGYRREGKRYMTIAVGCTGGKHRSVAMSEALASRLGKDSGLNVRVVHRDLGRE.

Residue 24-31 coordinates ATP; the sequence is GLSGAGLQ. 75–78 is a GTP binding site; it reads DVRS.

It belongs to the RapZ-like family.

In terms of biological role, displays ATPase and GTPase activities. This Rhodococcus jostii (strain RHA1) protein is Nucleotide-binding protein RHA1_ro07174.